We begin with the raw amino-acid sequence, 450 residues long: MFS-type transporter avaK (450 aa).

Helical transmembrane passes span 18–38, 100–120, 148–168, 171–191, 244–264, 280–300, 329–349, and 408–428; these read VMALNSLLILFTNFAIFLSMP, RVVCIYSDVLPLSLVWLSGLL, AVALLRLHSVFIVAKIFAAPA, ALVALTSAWTPFLISLAMLFV, APIIIVNLVASITKSSNHFLL, LVLVIREASSLLTYLVLMPAA, FGFFSIALAGTPVVYVLALAF, and GWLGIPYIAAGLFFITVLVAV.

It belongs to the major facilitator superfamily.

It is found in the membrane. It participates in secondary metabolite biosynthesis. In terms of biological role, MFS-type transporter; part of the cluster that mediates the biosynthesis of a highly modified cyclo-arginine-tryptophan dipeptide (cRW). The protein is MFS-type transporter avaK of Aspergillus versicolor.